Here is a 314-residue protein sequence, read N- to C-terminus: Protein REGULATOR OF FATTY ACID COMPOSITION 3, chloroplastic (314 aa).

The transit peptide at 1-47 (MESLLHASSSLVSLRPRIDGRDSFINPSRVCLNPSLGRRGSKPLPLV) directs the protein to the chloroplast. Disordered stretches follow at residues 49–73 (AAKK…ATGP) and 214–314 (AITE…NVGG). Basic and acidic residues predominate over residues 56 to 69 (KKDDNHNFSARPDE). 2 stretches are compositionally biased toward acidic residues: residues 233 to 269 (EYYD…DDDG) and 277 to 294 (GDEE…EQEE). A compositionally biased stretch (basic and acidic residues) spans 295 to 308 (GQDKSTNGRRETRR).

It belongs to the bacterial ribosomal protein bS6 family. Interacts with CFM3B/SPRT2 in plastids. As to expression, expressed ubiquitously in roots, leaves, stems, flower buds, flowers and siliques.

The protein resides in the plastid. The protein localises to the chloroplast. Its function is as follows. Prevents non-specific action of the splicing factor CFM3b during plastid rRNA biogenesis to improve the accuracy of plastid rRNA processing. Required for plastid functions such as photosynthesis, intracellular distribution, plastid rRNAs biosynthesis and plastid gene expression in roots. Involved in a sucrose-conditional process important for the organization of root lateral and apical meristems (e.g. establishment of RAM from pericycle and symplasmic connectivity), and subsequent primary and lateral roots development. Modulates C18 unsaturated fatty acid metabolism. This Arabidopsis thaliana (Mouse-ear cress) protein is Protein REGULATOR OF FATTY ACID COMPOSITION 3, chloroplastic.